Reading from the N-terminus, the 66-residue chain is Conotoxin mr5.2 (66 aa).

The signal sequence occupies residues 1-19; that stretch reads MRCVPVFVILLLLIASAPT. Positions 20-48 are excised as a propeptide; it reads VDAQLKTKDDMPLASFHANVKRTLQILRD. 4-carboxyglutamate is present on residues glutamate 57 and glutamate 61. An Asparagine amide modification is found at asparagine 65.

Contains 2 disulfide bonds that can be either 'C1-C3, C2-C4' or 'C1-C4, C2-C3', since these disulfide connectivities have been observed for conotoxins with cysteine framework V (for examples, see AC P0DQQ7 and AC P81755). In terms of tissue distribution, expressed by the venom duct.

Its subcellular location is the secreted. The chain is Conotoxin mr5.2 from Conus marmoreus (Marble cone).